Here is a 423-residue protein sequence, read N- to C-terminus: MSSRVFRATPDNNYLVPRRSKDQQDTSPDRNRIWSEPRLKPVVNRKVPVVYYLCRNGQLDHPHFIEVTLSSHDGLYLKDVINRLNDLRGKGMASLYSWSSKRSYKNGFVWHDLSEDDFIFPVQGQEYVLKGSEVLDSCLISNPRSLLETSSFRDPRSLNPDKNSGDDIPAVINRRRNQSWSSIDLSEYKVYKATESSAESTQRLAADASTQTDDRRRRRRPAKEEIEEVKSPASYENQSTELSRDEISPPPSDSSPETLENLIKADGRLILRPSESSTDHRTVESLSSGRMRASAVLMQLISCGTMSFKECGPVLLKDQGLALNGRSGCTITRGAEDNGEERVDKELKSFGRVQLEDKEYFSGSLIETKKELVPALKRSSSYNADRCSRMGPTTEKDEEEAVRAKCIPRKPKPVAKRNNGGQQ.

Residues 1 to 33 (MSSRVFRATPDNNYLVPRRSKDQQDTSPDRNRI) form a disordered region. The span at 19–33 (RSKDQQDTSPDRNRI) shows a compositional bias: basic and acidic residues. The DIX-like oligomerization domain stretch occupies residues 45-136 (RKVPVVYYLC…YVLKGSEVLD (92 aa)). 2 disordered regions span residues 150-172 (SSFRDPRSLNPDKNSGDDIPAVI) and 196-258 (SSAE…SPET). A compositionally biased stretch (polar residues) spans 196 to 211 (SSAESTQRLAADASTQ). 2 short sequence motifs (association to cell membranes) span residues 233-234 (AS) and 303-304 (CG). Residues 379-423 (SSSYNADRCSRMGPTTEKDEEEAVRAKCIPRKPKPVAKRNNGGQQ) are disordered. The span at 406–415 (CIPRKPKPVA) shows a compositional bias: basic residues.

It belongs to the SOSEKI family. As to quaternary structure, homodimer. Forms long polymer filaments with other SOKs proteins polymers (e.g. SOK1, SOK2, SOK3 and SOK4) crucial for polar localization and biological activity. Binds to ANGUSTIFOLIA (AN). In terms of tissue distribution, expressed during embryogenesis and in roots.

The protein resides in the cell membrane. In terms of biological role, SOSEKI proteins (SOK1-5) locally interpret global polarity cues and can influence cell division orientation to coordinate cell polarization relative to body axes. The chain is Protein SOSEKI 5 from Arabidopsis thaliana (Mouse-ear cress).